A 397-amino-acid chain; its full sequence is Phosphoglycerate transport regulatory protein PgtC (397 aa).

Residues 1–24 form the signal peptide; it reads MFGSCQAYSRELVMATTFSPSATA. The helical transmembrane segment at 102–117 threads the bilayer; it reads TSVAVAVSGFGLLINR.

The protein resides in the cell membrane. Its function is as follows. Required for pgtP expression, it may act jointly with the PgtA/PgtB signaling proteins. The protein is Phosphoglycerate transport regulatory protein PgtC (pgtC) of Salmonella typhi.